The primary structure comprises 100 residues: Small ribosomal subunit protein bS20 (100 aa).

Residues 79–100 (AAHQKSRLSAAVKQAIEPAPST) are disordered.

It belongs to the bacterial ribosomal protein bS20 family.

In terms of biological role, binds directly to 16S ribosomal RNA. The chain is Small ribosomal subunit protein bS20 from Prochlorococcus marinus (strain MIT 9303).